A 1534-amino-acid polypeptide reads, in one-letter code: Dicer-like protein 1 (1534 aa).

The interval 36-70 (PSAEPGVEHDQISPGESDEEIEENISDQNNSSSQK) is disordered. Residues 51 to 60 (ESDEEIEENI) show a composition bias toward acidic residues. Residues 130–311 (LFERAKAQNT…AAATRLETLL (182 aa)) form the Helicase ATP-binding domain. 143–150 (LDTGSGKT) lines the ATP pocket. The DEAH box motif lies at 256–259 (DEAH). In terms of domain architecture, Helicase C-terminal spans 456–613 (ELSKHFSHAP…FCETLPEDRI (158 aa)). A Dicer dsRNA-binding fold domain is found at 648-738 (AIAILARYAS…KSIYHKRLPA (91 aa)). Residues 888 to 1016 (KTVTFVQEND…ICAEPLKISA (129 aa)) form the PAZ domain. RNase III domains are found at residues 1054 to 1199 (SDYA…LSGG) and 1250 to 1402 (ALQV…VDSD). E1291, D1388, and E1391 together coordinate Mg(2+). Positions 1436–1504 (TFLHNRLANE…SERALVVLDG (69 aa)) constitute a DRBM domain. 4 residues coordinate Zn(2+): C1448, H1475, C1516, and C1518.

Belongs to the helicase family. Dicer subfamily. Mg(2+) is required as a cofactor. Requires Mn(2+) as cofactor.

Dicer-like endonuclease involved in cleaving double-stranded RNA in the RNA interference (RNAi) pathway. Produces 21 to 25 bp dsRNAs (siRNAs) which target the selective destruction of homologous RNAs leading to sequence-specific suppression of gene expression, called post-transcriptional gene silencing (PTGS). Part of a broad host defense response against viral infection and transposons. The chain is Dicer-like protein 1 (dcl1) from Aspergillus clavatus (strain ATCC 1007 / CBS 513.65 / DSM 816 / NCTC 3887 / NRRL 1 / QM 1276 / 107).